The chain runs to 460 residues: Ribosomal protein uS12 methylthiotransferase RimO (460 aa).

An MTTase N-terminal domain is found at 16–130 (NKIHFISLGC…ILSAIESKES (115 aa)). Residues Cys25, Cys61, Cys93, Cys164, Cys168, and Cys171 each contribute to the [4Fe-4S] cluster site. One can recognise a Radical SAM core domain in the interval 150–382 (STPKHYAYLK…SQTQKKNVEK (233 aa)). The TRAM domain occupies 385-455 (KQFVGKIVEA…GYDLVGRVVN (71 aa)).

Belongs to the methylthiotransferase family. RimO subfamily. [4Fe-4S] cluster serves as cofactor.

It is found in the cytoplasm. The catalysed reaction is L-aspartate(89)-[ribosomal protein uS12]-hydrogen + (sulfur carrier)-SH + AH2 + 2 S-adenosyl-L-methionine = 3-methylsulfanyl-L-aspartate(89)-[ribosomal protein uS12]-hydrogen + (sulfur carrier)-H + 5'-deoxyadenosine + L-methionine + A + S-adenosyl-L-homocysteine + 2 H(+). Its function is as follows. Catalyzes the methylthiolation of an aspartic acid residue of ribosomal protein uS12. The sequence is that of Ribosomal protein uS12 methylthiotransferase RimO from Chlamydia abortus (strain DSM 27085 / S26/3) (Chlamydophila abortus).